The chain runs to 155 residues: Large ribosomal subunit protein uL22 (155 aa).

Residues His109–Glu155 form a disordered region. The span at Lys146–Glu155 shows a compositional bias: basic and acidic residues.

Belongs to the universal ribosomal protein uL22 family. In terms of assembly, part of the 50S ribosomal subunit.

In terms of biological role, this protein binds specifically to 23S rRNA; its binding is stimulated by other ribosomal proteins, e.g. L4, L17, and L20. It is important during the early stages of 50S assembly. It makes multiple contacts with different domains of the 23S rRNA in the assembled 50S subunit and ribosome. Functionally, the globular domain of the protein is located near the polypeptide exit tunnel on the outside of the subunit, while an extended beta-hairpin is found that lines the wall of the exit tunnel in the center of the 70S ribosome. In Mycolicibacterium vanbaalenii (strain DSM 7251 / JCM 13017 / BCRC 16820 / KCTC 9966 / NRRL B-24157 / PYR-1) (Mycobacterium vanbaalenii), this protein is Large ribosomal subunit protein uL22.